A 635-amino-acid chain; its full sequence is MIQITLPDNSRREFPGPVSVAEVAQSIGPGLAKMTVAGKVDGKLVDASDVIDHDARLQIITPRDDEGLEIIRHSTAHLVGHAVKQLYPTAKMVIGPVIEEGFYYDISYERPFTPEDMAAIEARMRELIAQDYDVVKKMTPRAEVIEVFKSRGEDYKLRLVEDMPDEQAMGLYYHQEYVDMCRGPHVPNTRFLKVFKLTKLAGAYWRGDAKNEQLQRIYGTAWADKKQLDQYIQRIEEAEKRDHRKLGKELDLFHIDEVAPGVVFWHPKGWALWQAVEQYMRGIYRDTGYWEVKGPQILDKSLWEKTGHWQNYRDNMFTTESEKREYALKPMNCPGHVLIFKSDLRSYRDLPLRYGEFGQCHRNEPSGALHGIMRVRGFTQDDGHIFCTEDQILEECVAYTAQLQKVYADFGFTEILYKVATRPDNRVGSDELWDKAEHAVMEALRRSGVDFIISPGDGAFYGPKIEYTLKDALGRQWQCGTMQVDFNTAERLGGEYVTETSGRAHPVMLHRAIVGSLERFIGMLIEHHAGALPAWLAPVQVAVLNISEGQADYAASVAKTLQNQGLRVQLDLHNEKITYKIRKHSLQKLPYILVVGDKEREAGAVAVRARGNQDLGAMSLESFVQRLVQDVADKR.

Residues 1–61 enclose the TGS domain; sequence MIQITLPDNS…DHDARLQIIT (61 aa). The segment at 242–533 is catalytic; it reads DHRKLGKELD…LIEHHAGALP (292 aa). The Zn(2+) site is built by cysteine 333, histidine 384, and histidine 510.

This sequence belongs to the class-II aminoacyl-tRNA synthetase family. Homodimer. Zn(2+) is required as a cofactor.

It localises to the cytoplasm. It catalyses the reaction tRNA(Thr) + L-threonine + ATP = L-threonyl-tRNA(Thr) + AMP + diphosphate + H(+). Functionally, catalyzes the attachment of threonine to tRNA(Thr) in a two-step reaction: L-threonine is first activated by ATP to form Thr-AMP and then transferred to the acceptor end of tRNA(Thr). Also edits incorrectly charged L-seryl-tRNA(Thr). The polypeptide is Threonine--tRNA ligase (Variovorax paradoxus (strain S110)).